A 156-amino-acid chain; its full sequence is Small ribosomal subunit protein uS7 (156 aa).

It belongs to the universal ribosomal protein uS7 family. In terms of assembly, part of the 30S ribosomal subunit. Contacts proteins S9 and S11.

Its function is as follows. One of the primary rRNA binding proteins, it binds directly to 16S rRNA where it nucleates assembly of the head domain of the 30S subunit. Is located at the subunit interface close to the decoding center, probably blocks exit of the E-site tRNA. This is Small ribosomal subunit protein uS7 from Dinoroseobacter shibae (strain DSM 16493 / NCIMB 14021 / DFL 12).